Consider the following 141-residue polypeptide: Putative nickel-responsive regulator (141 aa).

Residues histidine 80, histidine 91, histidine 93, and cysteine 99 each coordinate Ni(2+).

This sequence belongs to the transcriptional regulatory CopG/NikR family. Homotetramer. Ni(2+) is required as a cofactor.

Its function is as follows. Transcriptional regulator. In Methanocaldococcus jannaschii (strain ATCC 43067 / DSM 2661 / JAL-1 / JCM 10045 / NBRC 100440) (Methanococcus jannaschii), this protein is Putative nickel-responsive regulator.